Consider the following 81-residue polypeptide: Putative sulfur carrier protein VNG_5061C/VNG_5236C/VNG_6059C/VNG_6467C (81 aa).

The Cysteine persulfide intermediate role is filled by C18.

Belongs to the sulfur carrier protein TusA family.

This is Putative sulfur carrier protein VNG_5061C/VNG_5236C/VNG_6059C/VNG_6467C from Halobacterium salinarum (strain ATCC 700922 / JCM 11081 / NRC-1) (Halobacterium halobium).